Here is a 445-residue protein sequence, read N- to C-terminus: Signal recognition particle 54 kDa protein (445 aa).

Residues 102–109 (GVQGSGKT), 184–188 (DTAGR), and 244–247 (TKMD) contribute to the GTP site.

The protein belongs to the GTP-binding SRP family. SRP54 subfamily. Part of the signal recognition particle protein translocation system, which is composed of SRP and FtsY. Archaeal SRP consists of a 7S RNA molecule of 300 nucleotides and two protein subunits: SRP54 and SRP19.

It localises to the cytoplasm. It catalyses the reaction GTP + H2O = GDP + phosphate + H(+). Its function is as follows. Involved in targeting and insertion of nascent membrane proteins into the cytoplasmic membrane. Binds to the hydrophobic signal sequence of the ribosome-nascent chain (RNC) as it emerges from the ribosomes. The SRP-RNC complex is then targeted to the cytoplasmic membrane where it interacts with the SRP receptor FtsY. The polypeptide is Signal recognition particle 54 kDa protein (Sulfurisphaera tokodaii (strain DSM 16993 / JCM 10545 / NBRC 100140 / 7) (Sulfolobus tokodaii)).